A 178-amino-acid chain; its full sequence is Inorganic pyrophosphatase (178 aa).

3 residues coordinate substrate: Lys-30, Arg-44, and Tyr-56. Mg(2+) contacts are provided by Asp-66, Asp-71, and Asp-103. Residue Tyr-142 coordinates substrate.

It belongs to the PPase family. Homohexamer. Mg(2+) serves as cofactor.

Its subcellular location is the cytoplasm. It carries out the reaction diphosphate + H2O = 2 phosphate + H(+). Its function is as follows. Catalyzes the hydrolysis of inorganic pyrophosphate (PPi) forming two phosphate ions. This is Inorganic pyrophosphatase from Xanthomonas campestris pv. campestris (strain ATCC 33913 / DSM 3586 / NCPPB 528 / LMG 568 / P 25).